Consider the following 52-residue polypeptide: Phospholamban (52 aa).

M1 bears the N-acetylmethionine mark. Topologically, residues 1–31 (MEKVQYLTRSAIRRASTIEMPQQARQKLQNL) are cytoplasmic. The residue at position 16 (S16) is a Phosphoserine; by PKA and DMPK. Positions 16-22 (STIEMPQ) are involved in HAX1 binding. At T17 the chain carries Phosphothreonine; by CaMK2. Residues 32–52 (FINFCLILICLLLICIIVMLL) traverse the membrane as a helical segment. C36 carries the S-palmitoyl cysteine lipid modification.

The protein belongs to the phospholamban family. Homopentamer. Can also form heterooligomers with other sarcoplasmic/endoplasmic reticulum calcium ATPase (SERCA) regulators ARLN, ERLN, SLN and STRIT1/DWORF. Monomer. Interacts with HAX1. Interacts as a monomer with ATP2A2; the interaction decreases ATP2A2 Ca(2+) affinity. Interacts with VMP1; VMP1 competes with PLN and SLN to prevent them from forming an inhibitory complex with ATP2A2. Interacts with S100A1 in a Ca(2+)-dependent manner. Phosphorylation by PKA abolishes the inhibition of ATP2A2-mediated calcium uptake. Phosphorylated at Thr-17 by CaMK2, and in response to beta-adrenergic stimulation. Phosphorylation by DMPK may stimulate sarcoplasmic reticulum calcium uptake in cardiomyocytes. In terms of processing, palmitoylated by ZDHHC16, promoting formation of the homopentamer. Post-translationally, in elongated spermatids, proteolytically cleaved by SPPL2C which modulates intracellular Ca(2+) homeostasis. In terms of tissue distribution, heart muscle (at protein level).

The protein localises to the endoplasmic reticulum membrane. It localises to the sarcoplasmic reticulum membrane. Its subcellular location is the mitochondrion membrane. It is found in the membrane. Reversibly inhibits the activity of ATP2A2/SERCA2 in cardiac sarcoplasmic reticulum by decreasing the apparent affinity of the ATPase for Ca(2+). Binds preferentially to the ATP-bound E1 conformational form of ATP2A2 which predominates at low Ca(2+) concentrations during the diastolic phase of the cardiac cycle. Inhibits ATP2A2 Ca(2+) affinity by disrupting its allosteric activation by ATP. Modulates the contractility of the heart muscle in response to physiological stimuli via its effects on ATP2A2. Modulates calcium re-uptake during muscle relaxation and plays an important role in calcium homeostasis in the heart muscle. The degree of ATP2A2 inhibition depends on the oligomeric state of PLN. ATP2A2 inhibition is alleviated by PLN phosphorylation. Also inhibits the activity of ATP2A3/SERCA3. Controls intracellular Ca(2+) levels in elongated spermatids and may play a role in germ cell differentiation. In the thalamic reticular nucleus of the brain, plays a role in the regulation of sleep patterns and executive functioning. The polypeptide is Phospholamban (Homo sapiens (Human)).